We begin with the raw amino-acid sequence, 1518 residues long: WD repeat-containing protein 62 (1518 aa).

An N-acetylalanine modification is found at Ala2. Ser33 bears the Phosphoserine mark. Position 46 is a phosphothreonine (Thr46). Residue Ser49 is modified to Phosphoserine. Residue Thr50 is modified to Phosphothreonine. A Phosphoserine modification is found at Ser52. WD repeat units lie at residues 109-150 (TARK…QVAE), 153-194 (GHKY…VVAS), 196-234 (KVSC…ETKV), 291-330 (INLK…YLAN), 357-396 (AVYP…RVGK), 402-450 (FHSS…DSHW), 490-529 (DVKA…ELVK), 532-574 (AHDA…NLEQ), 578-618 (DHSS…DGLH), 626-665 (AEKT…QKKC), 671-713 (GDEG…KMFG), and 714-752 (HSEI…TNCM). The residue at position 501 (Ser501) is a Phosphoserine. The segment covering 762–772 (RQQQQHTNDKK) has biased composition (basic and acidic residues). 2 disordered regions span residues 762-824 (RQQQ…DPDP) and 908-935 (ASLL…KESS). Residues 781–790 (TYVSTPSEIH) are compositionally biased toward polar residues. The span at 797 to 809 (QTEDDLEEECEPE) shows a compositional bias: acidic residues. Residues 803 to 846 (EEECEPEEMLKTPSKDSLDPDPRCLLTNGKLPLWAKRLLGDDDV) form a WD 13 repeat. Basic and acidic residues predominate over residues 810-824 (EMLKTPSKDSLDPDP). The segment covering 908-920 (ASLLSESESPQEA) has biased composition (low complexity). Residue Ser944 is modified to Phosphoserine. The interval 962–1055 (EVEAGPGDQQ…PSSSLPQTPE (94 aa)) is disordered. Composition is skewed to polar residues over residues 971-981 (QGDSYLRVSSD) and 1045-1054 (VPSSSLPQTP). At Thr1053 the chain carries Phosphothreonine. Residues Ser1070, Ser1093, Ser1101, Ser1123, Ser1144, Ser1228, Ser1248, and Ser1249 each carry the phosphoserine modification. A WD 14 repeat occupies 1132 to 1173 (GGSQPRAGTGYASPDRTHVLAAGKAEETLEAWRPPPPCLTSL). The stretch at 1255–1293 (SLGQELQAITTATTPSLDSEGQEPALRSWGNHEARANLR) is one WD 15 repeat. Thr1268 bears the Phosphothreonine mark. Residues 1339–1377 (FRPSLPAPESPGLPAHPSNPQLPEARPGIPGGTASLLEP) are disordered.

In terms of assembly, can form homodimers (via C-terminus). Interacts (via C-terminus) with MAPKBP1 (via C-terminus). Interacts with CDK5RAP2, CEP152, CEP63 and KIAA0753. CEP63, CDK5RAP2, CEP152, WDR62 are proposed to form a stepwise assembled complex at the centrosome forming a ring near parental centrioles. As to expression, present in fetal brain, enriched within the ventricular and subventricular zone (at protein level). In the embryonic brain it is expressed in mitotic neural precursor cells.

It is found in the nucleus. Its subcellular location is the cytoplasm. The protein resides in the cytoskeleton. The protein localises to the spindle pole. It localises to the microtubule organizing center. It is found in the centrosome. Its subcellular location is the centriole. Required for cerebral cortical development. Plays a role in neuronal proliferation and migration. Plays a role in mother-centriole-dependent centriole duplication; the function also seems to involve CEP152, CDK5RAP2 and CEP63 through a stepwise assembled complex at the centrosome that recruits CDK2 required for centriole duplication. This is WD repeat-containing protein 62 (WDR62) from Homo sapiens (Human).